A 498-amino-acid chain; its full sequence is Galactose-1-phosphate uridylyltransferase (498 aa).

It belongs to the galactose-1-phosphate uridylyltransferase type 2 family.

It is found in the cytoplasm. The catalysed reaction is alpha-D-galactose 1-phosphate + UDP-alpha-D-glucose = alpha-D-glucose 1-phosphate + UDP-alpha-D-galactose. It functions in the pathway carbohydrate metabolism; galactose metabolism. This Latilactobacillus sakei subsp. sakei (strain 23K) (Lactobacillus sakei subsp. sakei) protein is Galactose-1-phosphate uridylyltransferase.